We begin with the raw amino-acid sequence, 158 residues long: Probable deoxyuridine 5'-triphosphate nucleotidohydrolase (158 aa).

It belongs to the dUTPase family. Mg(2+) is required as a cofactor.

It catalyses the reaction dUTP + H2O = dUMP + diphosphate + H(+). It functions in the pathway pyrimidine metabolism; dUMP biosynthesis; dUMP from dCTP (dUTP route): step 1/2. This enzyme is involved in nucleotide metabolism: it produces dUMP, the immediate precursor of thymidine nucleotides and it decreases the intracellular concentration of dUTP so that uracil cannot be incorporated into DNA. It does probably not deaminate dCTP. This Sulfolobus islandicus rod-shaped virus 1 (SIRV-1) protein is Probable deoxyuridine 5'-triphosphate nucleotidohydrolase.